The primary structure comprises 383 residues: Gamma-butyrobetaine dioxygenase (383 aa).

Positions 46, 48, 51, and 91 each coordinate Zn(2+). Fe cation is bound by residues H209, D211, and H350.

It belongs to the gamma-BBH/TMLD family. As to quaternary structure, homodimer. Requires Fe(2+) as cofactor. L-ascorbate serves as cofactor.

Its subcellular location is the cytoplasm. The enzyme catalyses 4-(trimethylamino)butanoate + 2-oxoglutarate + O2 = carnitine + succinate + CO2. It participates in amine and polyamine biosynthesis; carnitine biosynthesis. In terms of biological role, catalyzes the formation of L-carnitine from gamma-butyrobetaine. The sequence is that of Gamma-butyrobetaine dioxygenase from Pseudomonas sp. (strain AK-1).